Consider the following 126-residue polypeptide: Protein ApaG (126 aa).

Positions 2 to 126 constitute an ApaG domain; sequence SDSRYKVDVS…FRLAVPGSLH (125 aa).

The sequence is that of Protein ApaG from Pseudomonas syringae pv. tomato (strain ATCC BAA-871 / DC3000).